Consider the following 607-residue polypeptide: ATP-dependent zinc metalloprotease FtsH 2 (607 aa).

The Cytoplasmic segment spans residues 1–2 (MR). The chain crosses the membrane as a helical span at residues 3–23 (SLWIVLVLVLGSALLLQVMAA). The Periplasmic segment spans residues 24-99 (SDDRIPYARF…PYTRVADELG (76 aa)). The chain crosses the membrane as a helical span at residues 100–120 (LPPYLWLLLPLAGLAAMGHLA). The Cytoplasmic segment spans residues 121 to 607 (SRRATTAGTI…LREMVASGEA (487 aa)). Residue 195–202 (GPPGTGKT) coordinates ATP. His-418 lines the Zn(2+) pocket. Residue Glu-419 is part of the active site. Residues His-422 and Asp-495 each coordinate Zn(2+).

In the central section; belongs to the AAA ATPase family. It in the C-terminal section; belongs to the peptidase M41 family. In terms of assembly, homohexamer. Zn(2+) serves as cofactor.

It localises to the cell inner membrane. Functionally, acts as a processive, ATP-dependent zinc metallopeptidase for both cytoplasmic and membrane proteins. Plays a role in the quality control of integral membrane proteins. The chain is ATP-dependent zinc metalloprotease FtsH 2 from Sorangium cellulosum (strain So ce56) (Polyangium cellulosum (strain So ce56)).